A 203-amino-acid polypeptide reads, in one-letter code: Flagellar transcriptional regulator FlhC (203 aa).

Residues C161, C164, C181, and C184 each contribute to the Zn(2+) site.

Belongs to the FlhC family. As to quaternary structure, heterohexamer composed of two FlhC and four FlhD subunits. Each FlhC binds a FlhD dimer, forming a heterotrimer, and a hexamer assembles by dimerization of two heterotrimers. It depends on Zn(2+) as a cofactor.

The protein resides in the cytoplasm. Functionally, functions in complex with FlhD as a master transcriptional regulator that regulates transcription of several flagellar and non-flagellar operons by binding to their promoter region. Activates expression of class 2 flagellar genes, including fliA, which is a flagellum-specific sigma factor that turns on the class 3 genes. Also regulates genes whose products function in a variety of physiological pathways. This chain is Flagellar transcriptional regulator FlhC, found in Cupriavidus necator (strain ATCC 17699 / DSM 428 / KCTC 22496 / NCIMB 10442 / H16 / Stanier 337) (Ralstonia eutropha).